The primary structure comprises 100 residues: Putative pterin-4-alpha-carbinolamine dehydratase (100 aa).

This sequence belongs to the pterin-4-alpha-carbinolamine dehydratase family.

The enzyme catalyses (4aS,6R)-4a-hydroxy-L-erythro-5,6,7,8-tetrahydrobiopterin = (6R)-L-erythro-6,7-dihydrobiopterin + H2O. This Allorhizobium ampelinum (strain ATCC BAA-846 / DSM 112012 / S4) (Agrobacterium vitis (strain S4)) protein is Putative pterin-4-alpha-carbinolamine dehydratase.